A 79-amino-acid chain; its full sequence is Cytochrome b (79 aa).

A run of 3 helical transmembrane segments spans residues Ser-1–Met-7, Trp-31–Ile-52, and Trp-67–Ala-79. Heme b contacts are provided by His-37 and His-51.

The protein belongs to the cytochrome b family. The cytochrome bc1 complex contains 11 subunits: 3 respiratory subunits (MT-CYB, CYC1 and UQCRFS1), 2 core proteins (UQCRC1 and UQCRC2) and 6 low-molecular weight proteins (UQCRH/QCR6, UQCRB/QCR7, UQCRQ/QCR8, UQCR10/QCR9, UQCR11/QCR10 and a cleavage product of UQCRFS1). This cytochrome bc1 complex then forms a dimer. The cofactor is heme b.

It localises to the mitochondrion inner membrane. In terms of biological role, component of the ubiquinol-cytochrome c reductase complex (complex III or cytochrome b-c1 complex) that is part of the mitochondrial respiratory chain. The b-c1 complex mediates electron transfer from ubiquinol to cytochrome c. Contributes to the generation of a proton gradient across the mitochondrial membrane that is then used for ATP synthesis. This chain is Cytochrome b (MT-CYB), found in Dipodomys heermanni (Heermann's kangaroo rat).